We begin with the raw amino-acid sequence, 476 residues long: MWTGYKILIFSYLTTEIWMEKQYLSQREVDLEAYFTRNHTVLQGTRFKRAIFQGQYCRNFGCCEDRDDGCVTEFYAANALCYCDKFCDRENSDCCPDYKSFCREEKEWPPHTQPWYPEGCFKDGQHYEEGSVIKENCNSCTCSGQQWKCSQHVCLVRSELIEQVNKGDYGWTAQNYSQFWGMTLEDGFKFRLGTLPPSPMLLSMNEMTASLPATTDLPEFFVASYKWPGWTHGPLDQKNCAASWAFSTASVAADRIAIQSKGRYTANLSPQNLISCCAKNRHGCNSGSIDRAWWYLRKRGLVSHACYPLFKDQNATNNGCAMASRSDGRGKRHATKPCPNNVEKSNRIYQCSPPYRVSSNETEIMKEIMQNGPVQAIMQVREDFFHYKTGIYRHVTSTNKESEKYRKLQTHAVKLTGWGTLRGAQGQKEKFWIAANSWGKSWGENGYFRILRGVNESDIEKLIIAAWGQLTSSDEP.

The N-linked (GlcNAc...) asparagine glycan is linked to Asn-38. Positions Asn-59–Glu-107 constitute an SMB domain. Disulfide bonds link Cys-63–Cys-70, Cys-70–Cys-102, Cys-81–Cys-83, Cys-81–Cys-95, Cys-87–Cys-94, and Cys-95–Cys-102. 4 N-linked (GlcNAc...) asparagine glycosylation sites follow: Asn-175, Asn-314, Asn-360, and Asn-455.

Belongs to the peptidase C1 family. In terms of processing, it has been suggested that the active SMB domain may be permitted considerable disulfide bond heterogeneity or variability, thus 2 alternate disulfide patterns based on 3D structures are described with 1 disulfide bond conserved in both. As to expression, expressed in the kidney cortex, small intestine and cornea.

It localises to the secreted. The protein localises to the extracellular space. It is found in the extracellular matrix. The protein resides in the basement membrane. Mediates adhesion of proximal tubule epithelial cells via integrins alpha3-beta1 and alphaV-beta3. This is a non catalytic peptidase C1 family protein. This is Tubulointerstitial nephritis antigen (TINAG) from Homo sapiens (Human).